The primary structure comprises 161 residues: Large ribosomal subunit protein uL15 (161 aa).

Residues 1–43 (MKLSEISDNPGARKKRMRIGRGIGSGKGKTGGRGGKGQTARSG) form a disordered region. Over residues 21-37 (RGIGSGKGKTGGRGGKG) the composition is skewed to gly residues.

Belongs to the universal ribosomal protein uL15 family. Part of the 50S ribosomal subunit.

In terms of biological role, binds to the 23S rRNA. This Rhodopseudomonas palustris (strain HaA2) protein is Large ribosomal subunit protein uL15.